The sequence spans 466 residues: Fumarate hydratase class II (466 aa).

Substrate-binding positions include 100-102 (SGT), Arg128, 131-134 (HPND), 141-143 (SSN), and Thr189. Residues 122–137 (GERGERRKVHPNDDVN) are compositionally biased toward basic and acidic residues. A disordered region spans residues 122–143 (GERGERRKVHPNDDVNKGQSSN). His190 acts as the Proton donor/acceptor in catalysis. The active site involves Ser320. Residues Ser321 and 326-328 (KVN) each bind substrate.

This sequence belongs to the class-II fumarase/aspartase family. Fumarase subfamily. In terms of assembly, homotetramer.

The protein resides in the cytoplasm. It catalyses the reaction (S)-malate = fumarate + H2O. The protein operates within carbohydrate metabolism; tricarboxylic acid cycle; (S)-malate from fumarate: step 1/1. In terms of biological role, involved in the TCA cycle. Catalyzes the stereospecific interconversion of fumarate to L-malate. The sequence is that of Fumarate hydratase class II from Myxococcus xanthus (strain DK1622).